We begin with the raw amino-acid sequence, 157 residues long: Small ribosomal subunit protein uS7 (157 aa).

The protein belongs to the universal ribosomal protein uS7 family. As to quaternary structure, part of the 30S ribosomal subunit. Contacts proteins S9 and S11.

In terms of biological role, one of the primary rRNA binding proteins, it binds directly to 16S rRNA where it nucleates assembly of the head domain of the 30S subunit. Is located at the subunit interface close to the decoding center, probably blocks exit of the E-site tRNA. This chain is Small ribosomal subunit protein uS7, found in Chloroflexus aggregans (strain MD-66 / DSM 9485).